A 250-amino-acid polypeptide reads, in one-letter code: Triosephosphate isomerase (250 aa).

Asn10 and Lys12 together coordinate substrate. His94 functions as the Electrophile in the catalytic mechanism. Residue Glu167 is the Proton acceptor of the active site.

This sequence belongs to the triosephosphate isomerase family. As to quaternary structure, homodimer.

Its subcellular location is the cytoplasm. It carries out the reaction D-glyceraldehyde 3-phosphate = dihydroxyacetone phosphate. Its pathway is carbohydrate biosynthesis; gluconeogenesis. The protein operates within carbohydrate degradation; glycolysis; D-glyceraldehyde 3-phosphate from glycerone phosphate: step 1/1. The polypeptide is Triosephosphate isomerase (Taenia solium (Pork tapeworm)).